The primary structure comprises 352 residues: N-acetyl-gamma-glutamyl-phosphate reductase (352 aa).

C155 is a catalytic residue.

It belongs to the NAGSA dehydrogenase family. Type 1 subfamily.

Its subcellular location is the cytoplasm. The catalysed reaction is N-acetyl-L-glutamate 5-semialdehyde + phosphate + NADP(+) = N-acetyl-L-glutamyl 5-phosphate + NADPH + H(+). The protein operates within amino-acid biosynthesis; L-arginine biosynthesis; N(2)-acetyl-L-ornithine from L-glutamate: step 3/4. Its function is as follows. Catalyzes the NADPH-dependent reduction of N-acetyl-5-glutamyl phosphate to yield N-acetyl-L-glutamate 5-semialdehyde. This Picosynechococcus sp. (strain ATCC 27264 / PCC 7002 / PR-6) (Agmenellum quadruplicatum) protein is N-acetyl-gamma-glutamyl-phosphate reductase.